We begin with the raw amino-acid sequence, 355 residues long: UDP-3-O-acylglucosamine N-acyltransferase (355 aa).

Residue histidine 258 is the Proton acceptor of the active site.

This sequence belongs to the transferase hexapeptide repeat family. LpxD subfamily. In terms of assembly, homotrimer.

It catalyses the reaction a UDP-3-O-[(3R)-3-hydroxyacyl]-alpha-D-glucosamine + a (3R)-hydroxyacyl-[ACP] = a UDP-2-N,3-O-bis[(3R)-3-hydroxyacyl]-alpha-D-glucosamine + holo-[ACP] + H(+). It participates in bacterial outer membrane biogenesis; LPS lipid A biosynthesis. Functionally, catalyzes the N-acylation of UDP-3-O-acylglucosamine using 3-hydroxyacyl-ACP as the acyl donor. Is involved in the biosynthesis of lipid A, a phosphorylated glycolipid that anchors the lipopolysaccharide to the outer membrane of the cell. The chain is UDP-3-O-acylglucosamine N-acyltransferase from Rhizobium rhizogenes (strain K84 / ATCC BAA-868) (Agrobacterium radiobacter).